Reading from the N-terminus, the 257-residue chain is Thiazole synthase (257 aa).

K96 functions as the Schiff-base intermediate with DXP in the catalytic mechanism. Residues G157, 184–185, and 206–207 each bind 1-deoxy-D-xylulose 5-phosphate; these read AG and NT.

Belongs to the ThiG family. In terms of assembly, homotetramer. Forms heterodimers with either ThiH or ThiS.

Its subcellular location is the cytoplasm. The catalysed reaction is [ThiS sulfur-carrier protein]-C-terminal-Gly-aminoethanethioate + 2-iminoacetate + 1-deoxy-D-xylulose 5-phosphate = [ThiS sulfur-carrier protein]-C-terminal Gly-Gly + 2-[(2R,5Z)-2-carboxy-4-methylthiazol-5(2H)-ylidene]ethyl phosphate + 2 H2O + H(+). Its pathway is cofactor biosynthesis; thiamine diphosphate biosynthesis. In terms of biological role, catalyzes the rearrangement of 1-deoxy-D-xylulose 5-phosphate (DXP) to produce the thiazole phosphate moiety of thiamine. Sulfur is provided by the thiocarboxylate moiety of the carrier protein ThiS. In vitro, sulfur can be provided by H(2)S. This is Thiazole synthase from Bartonella bacilliformis (strain ATCC 35685 / KC583 / Herrer 020/F12,63).